The following is a 132-amino-acid chain: S-protein homolog 8 (132 aa).

Positions 1-20 (MHSLSWFLLVIGLSVGLSSG) are cleaved as a signal peptide.

Belongs to the plant self-incompatibility (S1) protein family. As to expression, mostly expressed in seedlings, stems, leaves and floral tissues, and, to a lower extent, in roots.

It is found in the secreted. In Arabidopsis thaliana (Mouse-ear cress), this protein is S-protein homolog 8.